We begin with the raw amino-acid sequence, 196 residues long: ATP-dependent Clp protease proteolytic subunit (196 aa).

S101 acts as the Nucleophile in catalysis. The active site involves H126.

Belongs to the peptidase S14 family. In terms of assembly, component of the chloroplastic Clp protease core complex.

Its subcellular location is the plastid. It localises to the chloroplast stroma. The enzyme catalyses Hydrolysis of proteins to small peptides in the presence of ATP and magnesium. alpha-casein is the usual test substrate. In the absence of ATP, only oligopeptides shorter than five residues are hydrolyzed (such as succinyl-Leu-Tyr-|-NHMec, and Leu-Tyr-Leu-|-Tyr-Trp, in which cleavage of the -Tyr-|-Leu- and -Tyr-|-Trp bonds also occurs).. In terms of biological role, cleaves peptides in various proteins in a process that requires ATP hydrolysis. Has a chymotrypsin-like activity. Plays a major role in the degradation of misfolded proteins. This Populus trichocarpa (Western balsam poplar) protein is ATP-dependent Clp protease proteolytic subunit.